The sequence spans 408 residues: Dicamba O-demethylase 1, ferredoxin reductase component (408 aa).

FAD is bound by residues G14, K49, V82, R130, D279, and V298.

Belongs to the FAD-dependent oxidoreductase family. As to quaternary structure, monomer. The dicamba O-demethylase multicomponent enzyme system is composed of an oxygenase component (DdmC) and an electron transfer component formed by a ferredoxin reductase (DdmA1) and a ferredoxin (DdmB). In vitro, dicamba O-demethylase assays in which DdmA2 is substituted for DdmA1 demonstrate that the two enzymes possess nearly identical activities. The cofactor is FAD.

The catalysed reaction is 2 reduced [2Fe-2S]-[ferredoxin] + NAD(+) + H(+) = 2 oxidized [2Fe-2S]-[ferredoxin] + NADH. Functionally, component of the dicamba O-demethylase multicomponent enzyme system involved in the degradation of the herbicide dicamba. In vitro, catalyzes the transfers of electrons from ferredoxin (DdmB) to NADH. Both NADH and NADPH support enzyme activity, with NADH being markedly more effective than NADPH. This is Dicamba O-demethylase 1, ferredoxin reductase component from Stenotrophomonas maltophilia (Pseudomonas maltophilia).